We begin with the raw amino-acid sequence, 535 residues long: Nuclear/nucleolar GTPase 2 (535 aa).

Positions 1 to 42 are disordered; sequence MAKKKERAVNVSGKPRHSLDVNRANDKKGAGGGAGGGGGGRS. Basic and acidic residues predominate over residues 17–29; that stretch reads HSLDVNRANDKKG. Positions 30–41 are enriched in gly residues; that stretch reads AGGGAGGGGGGR. In terms of domain architecture, CP-type G spans 213–374; the sequence is WGELYKVIDS…LIDCPGVVYQ (162 aa). A G4 region spans residues 261–264; it reads NKCD. Residues 290–292 are G5; that stretch reads SIN. A G1 region spans residues 323-330; it reads GYPNVGKS. The interval 349 to 353 is G2; that stretch reads GETKV. The interval 367–370 is G3; that stretch reads DCPG. A disordered region spans residues 464–495; the sequence is FFVPPPQQGEDSPSETAEPVDKSDEEGVSSDR.

Belongs to the TRAFAC class YlqF/YawG GTPase family. RsgA subfamily.

It localises to the nucleus. The protein localises to the nucleolus. In terms of biological role, GTPase involved in pre-60S ribosomal subunit maturation. In Oryza sativa subsp. indica (Rice), this protein is Nuclear/nucleolar GTPase 2.